The chain runs to 200 residues: Putative pseudouridine methyltransferase (200 aa).

The S-adenosyl-L-methionine site is built by M133 and C187.

It belongs to the methyltransferase superfamily. TrmY family.

The protein localises to the cytoplasm. This is Putative pseudouridine methyltransferase from Alcanivorax borkumensis (strain ATCC 700651 / DSM 11573 / NCIMB 13689 / SK2).